The sequence spans 102 residues: MASVKSSSSSSSSSFISLLLLILLVIVLQSQVIECQPQQSCTASLTGLNVCAPFLVPGSPTASTECCNAVQSINHDCMCNTMRIAAQIPAQCNLPPLSCSAN.

The first 30 residues, 1 to 30 (MASVKSSSSSSSSSFISLLLLILLVIVLQS), serve as a signal peptide directing secretion. Cystine bridges form between C41–C77, C51–C66, C67–C92, and C79–C99.

The protein belongs to the A9/FIL1 family. As to expression, stamen- and tapetum-specific.

It is found in the secreted. The protein is Protein 108 of Solanum lycopersicum (Tomato).